Reading from the N-terminus, the 249-residue chain is Esterase YjfP (249 aa).

Displays esterase activity toward palmitoyl-CoA and pNP-butyrate. The polypeptide is Esterase YjfP (yjfP) (Escherichia coli (strain K12)).